Consider the following 119-residue polypeptide: Large ribosomal subunit protein uL18 (119 aa).

The protein belongs to the universal ribosomal protein uL18 family. In terms of assembly, part of the 50S ribosomal subunit; part of the 5S rRNA/L5/L18/L25 subcomplex. Contacts the 5S and 23S rRNAs.

Functionally, this is one of the proteins that bind and probably mediate the attachment of the 5S RNA into the large ribosomal subunit, where it forms part of the central protuberance. This chain is Large ribosomal subunit protein uL18, found in Anaeromyxobacter dehalogenans (strain 2CP-C).